Consider the following 335-residue polypeptide: Glyceraldehyde-3-phosphate dehydrogenase (335 aa).

NAD(+) is bound by residues 12–13, Asp36, Arg80, and Ser122; that span reads RI. Residues 152–154, Thr183, Arg198, 211–212, and Arg234 each bind D-glyceraldehyde 3-phosphate; these read SCT and TG. Cys153 serves as the catalytic Nucleophile. Asn316 serves as a coordination point for NAD(+).

The protein belongs to the glyceraldehyde-3-phosphate dehydrogenase family. In terms of assembly, homotetramer.

It localises to the cytoplasm. It carries out the reaction D-glyceraldehyde 3-phosphate + phosphate + NAD(+) = (2R)-3-phospho-glyceroyl phosphate + NADH + H(+). It participates in carbohydrate degradation; glycolysis; pyruvate from D-glyceraldehyde 3-phosphate: step 1/5. Catalyzes the oxidative phosphorylation of glyceraldehyde 3-phosphate (G3P) to 1,3-bisphosphoglycerate (BPG) using the cofactor NAD. The first reaction step involves the formation of a hemiacetal intermediate between G3P and a cysteine residue, and this hemiacetal intermediate is then oxidized to a thioester, with concomitant reduction of NAD to NADH. The reduced NADH is then exchanged with the second NAD, and the thioester is attacked by a nucleophilic inorganic phosphate to produce BPG. In Xanthobacter flavus, this protein is Glyceraldehyde-3-phosphate dehydrogenase (gap).